We begin with the raw amino-acid sequence, 228 residues long: AA9 family lytic polysaccharide monooxygenase A (228 aa).

Positions 1 and 86 each coordinate Cu(2+). His1 carries the methylhistidine modification. 2 disulfides stabilise this stretch: Cys56/Cys178 and Cys97/Cys101. Asn138 carries N-linked (GlcNAc...) asparagine glycosylation. O2 is bound by residues His164 and Gln173. Tyr175 is a Cu(2+) binding site.

It belongs to the polysaccharide monooxygenase AA9 family. Cu(2+) is required as a cofactor. In terms of processing, the catalytically essential N-terminal histidine His-22 is post-translationally modified by methylation to prevent protonation of the histidine side chain, and protect the critical active site of the enzyme from oxidative damage.

The protein resides in the secreted. It carries out the reaction [(1-&gt;4)-beta-D-glucosyl]n+m + reduced acceptor + O2 = 4-dehydro-beta-D-glucosyl-[(1-&gt;4)-beta-D-glucosyl]n-1 + [(1-&gt;4)-beta-D-glucosyl]m + acceptor + H2O.. Small amounts of H(2)O(2) boost LPMO activity, while higher amounts lead to inactivation of the enzyme. Lytic polysaccharide monooxygenase (LPMO) that depolymerizes crystalline and amorphous polysaccharides via the oxidation of scissile alpha- or beta-(1-4)-glycosidic bonds, yielding C1 and C4 oxidation product. Catalysis by LPMOs requires the reduction of the active-site copper from Cu(II) to Cu(I) by a reducing agent and H(2)O(2) or O(2) as a cosubstrate. Is able to cleave cellulose and xylan to produce C1- and C4-oxidized products. The protein is AA9 family lytic polysaccharide monooxygenase A of Thermoascus aurantiacus.